A 694-amino-acid chain; its full sequence is Glycine--tRNA ligase beta subunit (694 aa).

This sequence belongs to the class-II aminoacyl-tRNA synthetase family. Tetramer of two alpha and two beta subunits.

Its subcellular location is the cytoplasm. The enzyme catalyses tRNA(Gly) + glycine + ATP = glycyl-tRNA(Gly) + AMP + diphosphate. The protein is Glycine--tRNA ligase beta subunit of Acidithiobacillus ferrooxidans (strain ATCC 23270 / DSM 14882 / CIP 104768 / NCIMB 8455) (Ferrobacillus ferrooxidans (strain ATCC 23270)).